The sequence spans 384 residues: S-adenosylmethionine synthase (384 aa).

His-15 is a binding site for ATP. A Mg(2+)-binding site is contributed by Asp-17. Residue Glu-43 coordinates K(+). The L-methionine site is built by Glu-56 and Gln-99. The interval 99–109 is flexible loop; it reads QSPDINQGVDR. ATP contacts are provided by residues 164 to 166, 230 to 231, Asp-239, 245 to 246, Ala-262, and Lys-266; these read DAK, RF, and RK. Position 239 (Asp-239) interacts with L-methionine. Lys-270 serves as a coordination point for L-methionine.

It belongs to the AdoMet synthase family. In terms of assembly, homotetramer; dimer of dimers. The cofactor is Mg(2+). Requires K(+) as cofactor.

The protein localises to the cytoplasm. The enzyme catalyses L-methionine + ATP + H2O = S-adenosyl-L-methionine + phosphate + diphosphate. It participates in amino-acid biosynthesis; S-adenosyl-L-methionine biosynthesis; S-adenosyl-L-methionine from L-methionine: step 1/1. Catalyzes the formation of S-adenosylmethionine (AdoMet) from methionine and ATP. The overall synthetic reaction is composed of two sequential steps, AdoMet formation and the subsequent tripolyphosphate hydrolysis which occurs prior to release of AdoMet from the enzyme. The sequence is that of S-adenosylmethionine synthase from Photobacterium profundum (strain SS9).